A 267-amino-acid chain; its full sequence is tRNA pseudouridine synthase A (267 aa).

The active-site Nucleophile is aspartate 51. Tyrosine 109 contacts substrate.

Belongs to the tRNA pseudouridine synthase TruA family. Homodimer.

The catalysed reaction is uridine(38/39/40) in tRNA = pseudouridine(38/39/40) in tRNA. In terms of biological role, formation of pseudouridine at positions 38, 39 and 40 in the anticodon stem and loop of transfer RNAs. The protein is tRNA pseudouridine synthase A of Staphylococcus aureus (strain MSSA476).